The chain runs to 383 residues: Acetylornithine deacetylase (383 aa).

His-80 is a Zn(2+) binding site. Asp-82 is a catalytic residue. Residue Asp-112 coordinates Zn(2+). The active site involves Glu-144. Zn(2+) is bound by residues Glu-145, Glu-169, and His-355.

It belongs to the peptidase M20A family. ArgE subfamily. In terms of assembly, homodimer. Requires Zn(2+) as cofactor. Co(2+) is required as a cofactor. It depends on glutathione as a cofactor.

Its subcellular location is the cytoplasm. The enzyme catalyses N(2)-acetyl-L-ornithine + H2O = L-ornithine + acetate. Its pathway is amino-acid biosynthesis; L-arginine biosynthesis; L-ornithine from N(2)-acetyl-L-ornithine (linear): step 1/1. Catalyzes the hydrolysis of the amide bond of N(2)-acetylated L-amino acids. Cleaves the acetyl group from N-acetyl-L-ornithine to form L-ornithine, an intermediate in L-arginine biosynthesis pathway, and a branchpoint in the synthesis of polyamines. This chain is Acetylornithine deacetylase, found in Escherichia coli O157:H7.